Consider the following 360-residue polypeptide: Phospho-N-acetylmuramoyl-pentapeptide-transferase (360 aa).

The next 10 helical transmembrane spans lie at 16-36 (FAVF…ALVL), 73-93 (TMGG…WADL), 97-117 (YVWV…VDDY), 134-154 (YFWQ…TAST), 168-188 (YSIP…VGSS), 199-219 (GLAI…CYLS), 236-256 (AGEL…FLWF), 263-283 (VFMG…IAVI), 288-308 (IVLF…VIQV), and 338-358 (VIVR…ATLK).

This sequence belongs to the glycosyltransferase 4 family. MraY subfamily. Requires Mg(2+) as cofactor.

The protein localises to the cell inner membrane. The enzyme catalyses UDP-N-acetyl-alpha-D-muramoyl-L-alanyl-gamma-D-glutamyl-meso-2,6-diaminopimeloyl-D-alanyl-D-alanine + di-trans,octa-cis-undecaprenyl phosphate = di-trans,octa-cis-undecaprenyl diphospho-N-acetyl-alpha-D-muramoyl-L-alanyl-D-glutamyl-meso-2,6-diaminopimeloyl-D-alanyl-D-alanine + UMP. The protein operates within cell wall biogenesis; peptidoglycan biosynthesis. Its function is as follows. Catalyzes the initial step of the lipid cycle reactions in the biosynthesis of the cell wall peptidoglycan: transfers peptidoglycan precursor phospho-MurNAc-pentapeptide from UDP-MurNAc-pentapeptide onto the lipid carrier undecaprenyl phosphate, yielding undecaprenyl-pyrophosphoryl-MurNAc-pentapeptide, known as lipid I. This is Phospho-N-acetylmuramoyl-pentapeptide-transferase from Pseudomonas fluorescens (strain Pf0-1).